A 450-amino-acid chain; its full sequence is Bifunctional protein GlmU (450 aa).

The interval 1 to 217 (MKTLILAAGL…VDEITGVNNR (217 aa)) is pyrophosphorylase. UDP-N-acetyl-alpha-D-glucosamine is bound by residues 6–9 (LAAG), K20, Q68, 73–74 (GT), 95–97 (YGD), G134, E146, N161, and N215. D97 contributes to the Mg(2+) binding site. N215 serves as a coordination point for Mg(2+). The segment at 218-238 (IQLANLEKKIRRKINEKLMNQ) is linker. Residues 239–450 (GVRIIDPNAV…GGQKNANNKK (212 aa)) form an N-acetyltransferase region. UDP-N-acetyl-alpha-D-glucosamine-binding residues include R320 and K338. The active-site Proton acceptor is H350. 2 residues coordinate UDP-N-acetyl-alpha-D-glucosamine: Y353 and N364. Residues A367, 373–374 (NY), S392, A410, and R427 contribute to the acetyl-CoA site.

In the N-terminal section; belongs to the N-acetylglucosamine-1-phosphate uridyltransferase family. It in the C-terminal section; belongs to the transferase hexapeptide repeat family. As to quaternary structure, homotrimer. Mg(2+) is required as a cofactor.

It is found in the cytoplasm. The enzyme catalyses alpha-D-glucosamine 1-phosphate + acetyl-CoA = N-acetyl-alpha-D-glucosamine 1-phosphate + CoA + H(+). It carries out the reaction N-acetyl-alpha-D-glucosamine 1-phosphate + UTP + H(+) = UDP-N-acetyl-alpha-D-glucosamine + diphosphate. It functions in the pathway nucleotide-sugar biosynthesis; UDP-N-acetyl-alpha-D-glucosamine biosynthesis; N-acetyl-alpha-D-glucosamine 1-phosphate from alpha-D-glucosamine 6-phosphate (route II): step 2/2. It participates in nucleotide-sugar biosynthesis; UDP-N-acetyl-alpha-D-glucosamine biosynthesis; UDP-N-acetyl-alpha-D-glucosamine from N-acetyl-alpha-D-glucosamine 1-phosphate: step 1/1. Its pathway is bacterial outer membrane biogenesis; LPS lipid A biosynthesis. In terms of biological role, catalyzes the last two sequential reactions in the de novo biosynthetic pathway for UDP-N-acetylglucosamine (UDP-GlcNAc). The C-terminal domain catalyzes the transfer of acetyl group from acetyl coenzyme A to glucosamine-1-phosphate (GlcN-1-P) to produce N-acetylglucosamine-1-phosphate (GlcNAc-1-P), which is converted into UDP-GlcNAc by the transfer of uridine 5-monophosphate (from uridine 5-triphosphate), a reaction catalyzed by the N-terminal domain. The polypeptide is Bifunctional protein GlmU (Thermosipho melanesiensis (strain DSM 12029 / CIP 104789 / BI429)).